The primary structure comprises 272 residues: Phosphate import ATP-binding protein PstB 1 (272 aa).

One can recognise an ABC transporter domain in the interval 26–267 (ISIENLNLFY…PMKKQTEDYI (242 aa)). 58–65 (GPSGCGKS) serves as a coordination point for ATP.

Belongs to the ABC transporter superfamily. Phosphate importer (TC 3.A.1.7) family. The complex is composed of two ATP-binding proteins (PstB), two transmembrane proteins (PstC and PstA) and a solute-binding protein (PstS).

Its subcellular location is the cell inner membrane. The enzyme catalyses phosphate(out) + ATP + H2O = ADP + 2 phosphate(in) + H(+). Part of the ABC transporter complex PstSACB involved in phosphate import. Responsible for energy coupling to the transport system. This chain is Phosphate import ATP-binding protein PstB 1, found in Vibrio parahaemolyticus serotype O3:K6 (strain RIMD 2210633).